The following is a 1063-amino-acid chain: Presequence protease, mitochondrial (1063 aa).

The N-terminal 33 residues, 1–33 (MLRLANRVSRKDSGNLGIAQLKKRLLATSGVSQ), are a transit peptide targeting the mitochondrion. Residue histidine 105 participates in Zn(2+) binding. Glutamate 108 functions as the Proton acceptor in the catalytic mechanism. Residue histidine 109 participates in Zn(2+) binding. Residue glutamate 181 is part of the active site. Glutamate 206 is a Zn(2+) binding site.

It belongs to the peptidase M16 family. PreP subfamily. Monomer and homodimer; homodimerization is induced by binding of the substrate. It depends on Zn(2+) as a cofactor.

The protein resides in the mitochondrion intermembrane space. The protein localises to the mitochondrion matrix. In terms of biological role, degrades mitochondrial transit peptides after their cleavage in the intermembrane space or in the matrix, and presequence peptides; clearance of these peptides is required to keep the presequence processing machinery running. Preferentially cleaves the N-terminal side of paired basic amino acid residues. Also degrades other unstructured peptides. May function as an ATP-dependent peptidase as opposed to a metalloendopeptidase. The sequence is that of Presequence protease, mitochondrial (CYM1) from Debaryomyces hansenii (strain ATCC 36239 / CBS 767 / BCRC 21394 / JCM 1990 / NBRC 0083 / IGC 2968) (Yeast).